The primary structure comprises 186 residues: MKLIAGLGNPGKKYERTRHNVGFMVVDELSFRHQTPWKKSKFNGMTSEIIVGGEKMILVKPLTFMNASGECIRPLMDYYNIPIEDVVIVYDDLDLPVGKIRLRQKGSAGGHNGMKSIIQHVKTQEFNRIRVGVSRPLKGEVIHYVLGDFPKAEQPDIIAAIQKSADAIEDFAQTPFIEVMNKYNQK.

Tyr-14 serves as a coordination point for tRNA. The Proton acceptor role is filled by His-19. Residues Phe-64, Asn-66, and Asn-112 each coordinate tRNA.

The protein belongs to the PTH family. As to quaternary structure, monomer.

The protein resides in the cytoplasm. It catalyses the reaction an N-acyl-L-alpha-aminoacyl-tRNA + H2O = an N-acyl-L-amino acid + a tRNA + H(+). In terms of biological role, hydrolyzes ribosome-free peptidyl-tRNAs (with 1 or more amino acids incorporated), which drop off the ribosome during protein synthesis, or as a result of ribosome stalling. Catalyzes the release of premature peptidyl moieties from peptidyl-tRNA molecules trapped in stalled 50S ribosomal subunits, and thus maintains levels of free tRNAs and 50S ribosomes. The chain is Peptidyl-tRNA hydrolase from Listeria monocytogenes serotype 4b (strain CLIP80459).